The following is a 214-amino-acid chain: Phosphoribosylglycinamide formyltransferase (214 aa).

Position 12–14 (12–14) interacts with N(1)-(5-phospho-beta-D-ribosyl)glycinamide; sequence GSN. Residues 105-108 and asparagine 123 contribute to the (6R)-10-formyltetrahydrofolate site; that span reads LLIL. Histidine 125 acts as the Proton donor in catalysis. Aspartate 167 is a binding site for (6R)-10-formyltetrahydrofolate. Glutamate 197 serves as a coordination point for N(1)-(5-phospho-beta-D-ribosyl)glycinamide.

This sequence belongs to the GART family.

The catalysed reaction is N(1)-(5-phospho-beta-D-ribosyl)glycinamide + (6R)-10-formyltetrahydrofolate = N(2)-formyl-N(1)-(5-phospho-beta-D-ribosyl)glycinamide + (6S)-5,6,7,8-tetrahydrofolate + H(+). It participates in purine metabolism; IMP biosynthesis via de novo pathway; N(2)-formyl-N(1)-(5-phospho-D-ribosyl)glycinamide from N(1)-(5-phospho-D-ribosyl)glycinamide (10-formyl THF route): step 1/1. The protein is Phosphoribosylglycinamide formyltransferase of Saccharomyces cerevisiae (strain ATCC 204508 / S288c) (Baker's yeast).